Here is a 295-residue protein sequence, read N- to C-terminus: uncharacterized protein (295 aa).

The protein localises to the plastid. It localises to the chloroplast. This is an uncharacterized protein from Euglena gracilis.